The chain runs to 3567 residues: Sushi, von Willebrand factor type A, EGF and pentraxin domain-containing protein 1 (3567 aa).

An N-terminal signal peptide occupies residues 1-17 (MWSRLAFCCWALALVSG). The VWFA domain maps to 84–265 (ELVFLVDESS…LARRALHEDL (182 aa)). An N-linked (GlcNAc...) asparagine glycan is attached at asparagine 187. Sushi domains follow at residues 377 to 436 (VHCP…FCRV), 437 to 496 (RTCP…RCVE), and 497 to 561 (RHCA…VCKD). 6 disulfide bridges follow: cysteine 379–cysteine 421, cysteine 407–cysteine 434, cysteine 439–cysteine 481, cysteine 467–cysteine 494, cysteine 499–cysteine 544, and cysteine 530–cysteine 559. HYR domains follow at residues 560–644 (KDVE…KVID) and 645–724 (VEPP…VIKG). The Sushi 4 domain occupies 725 to 789 (SPCEVPFTPV…YSTEWPDCAI (65 aa)). Cystine bridges form between cysteine 727/cysteine 769, cysteine 753/cysteine 787, cysteine 1196/cysteine 1207, cysteine 1201/cysteine 1216, cysteine 1218/cysteine 1227, cysteine 1234/cysteine 1245, cysteine 1239/cysteine 1254, cysteine 1256/cysteine 1265, cysteine 1272/cysteine 1283, cysteine 1277/cysteine 1292, cysteine 1294/cysteine 1303, cysteine 1310/cysteine 1321, cysteine 1315/cysteine 1330, cysteine 1332/cysteine 1341, cysteine 1348/cysteine 1359, cysteine 1353/cysteine 1368, cysteine 1370/cysteine 1379, cysteine 1386/cysteine 1397, cysteine 1391/cysteine 1406, and cysteine 1408/cysteine 1417. Residues 1192 to 1228 (VFHECFLNPCHNSGTCQQLGRGYVCLCPPGYTGLKCE) enclose the EGF-like 1 domain. Residues 1230–1266 (DIDECSSLPCLNGGICRDQVGGFTCECSLGYSGQICE) form the EGF-like 2; calcium-binding domain. One can recognise an EGF-like 3; calcium-binding domain in the interval 1268-1304 (NINECISSPCLNKGTCTDGLASYRCTCVKGYMGVHCE). The 37-residue stretch at 1306–1342 (DVNECQSSPCLNNAVCKDQVGGFSCKCPPGFLGTRCE) folds into the EGF-like 4; calcium-binding domain. The EGF-like 5; calcium-binding domain maps to 1344–1380 (NVDECLSQPCQNGATCKDGANSFRCQCPAGFTGTHCE). The EGF-like 6; calcium-binding domain maps to 1382 to 1418 (NINECQSNPCRNQATCVDELNSYSCKCQPGFSGHRCE). Positions 1423–1627 (SGFNLDFEVS…VKVDSSSMFC (205 aa)) constitute a Pentraxin (PTX) domain. Sushi domains are found at residues 1628-1686 (SDCP…HCER) and 1687-1744 (IRCG…SCLD). Cystine bridges form between cysteine 1630–cysteine 1671, cysteine 1657–cysteine 1684, cysteine 1689–cysteine 1729, cysteine 1715–cysteine 1742, cysteine 1748–cysteine 1760, cysteine 1754–cysteine 1769, cysteine 1771–cysteine 1782, cysteine 1788–cysteine 1828, cysteine 1814–cysteine 1841, cysteine 1846–cysteine 1886, cysteine 1872–cysteine 1899, cysteine 1904–cysteine 1944, cysteine 1930–cysteine 1957, cysteine 1962–cysteine 2002, cysteine 1988–cysteine 2015, cysteine 2020–cysteine 2060, cysteine 2046–cysteine 2077, cysteine 2082–cysteine 2125, cysteine 2111–cysteine 2140, cysteine 2145–cysteine 2185, cysteine 2171–cysteine 2198, cysteine 2203–cysteine 2244, cysteine 2230–cysteine 2258, cysteine 2263–cysteine 2303, cysteine 2289–cysteine 2317, cysteine 2322–cysteine 2362, cysteine 2348–cysteine 2375, cysteine 2380–cysteine 2421, cysteine 2407–cysteine 2434, cysteine 2439–cysteine 2479, cysteine 2465–cysteine 2492, cysteine 2497–cysteine 2537, cysteine 2523–cysteine 2550, cysteine 2555–cysteine 2595, and cysteine 2581–cysteine 2607. An EGF-like 7; calcium-binding domain is found at 1744-1783 (DVDECAVGSDCSEHASCLNTNGSYVCSCNPPYTGDGKNCA). 14 Sushi domains span residues 1780-1843 (KNCA…SCEA), 1844-1901 (ISCG…VCEL), 1902-1959 (VKCS…SCQL), 1960-2017 (VSCG…QCLA), 2018-2079 (VSCD…RCIA), 2080-2142 (HFCE…QCIP), 2143-2200 (VRCG…TCHP), 2201-2260 (VSCN…SCTP), 2261-2319 (LNCG…KCVP), 2320-2377 (TKCA…ICKM), 2378-2436 (VLCP…ECVP), 2437-2494 (VECP…MCKP), 2495-2552 (IECP…SCDA), and 2553-2609 (IHCS…TCVP). An important for the interaction with integrin ITGA9:ITGB1 region spans residues 2638–2645 (DMMEVPYL). 14 consecutive Sushi domains span residues 2660–2711 (NTKE…SCIS), 2712–2769 (IECD…RCEA), 2770–2827 (ISCS…MCIP), 2828–2885 (VDCG…SCMP), 2886–2943 (VRCP…VCKP), 2944–3001 (ATCG…SCLP), 3002–3057 (CRCS…LCEH), 3058–3115 (AQCG…TCEP), 3116–3174 (LSCG…TCSP), 3175–3234 (KKCP…SCIP), 3235–3292 (VVCG…VCRE), 3293–3350 (NRCE…LCKP), 3351–3409 (NPCP…RCEK), and 3410–3466 (ISCG…VCRA). Cystine bridges form between cysteine 2682/cysteine 2709, cysteine 2714/cysteine 2754, cysteine 2740/cysteine 2767, cysteine 2772/cysteine 2812, cysteine 2798/cysteine 2825, cysteine 2830/cysteine 2870, cysteine 2856/cysteine 2883, cysteine 2888/cysteine 2928, cysteine 2914/cysteine 2941, cysteine 2946/cysteine 2986, cysteine 2972/cysteine 2999, cysteine 3004/cysteine 3043, cysteine 3029/cysteine 3055, cysteine 3060/cysteine 3100, cysteine 3086/cysteine 3113, cysteine 3118/cysteine 3159, cysteine 3144/cysteine 3172, cysteine 3177/cysteine 3217, cysteine 3203/cysteine 3232, cysteine 3237/cysteine 3277, cysteine 3263/cysteine 3290, cysteine 3295/cysteine 3335, cysteine 3321/cysteine 3348, cysteine 3353/cysteine 3394, cysteine 3380/cysteine 3407, cysteine 3412/cysteine 3452, cysteine 3438/cysteine 3464, cysteine 3500/cysteine 3510, cysteine 3504/cysteine 3516, cysteine 3518/cysteine 3527, cysteine 3532/cysteine 3542, cysteine 3536/cysteine 3548, and cysteine 3550/cysteine 3559. EGF-like domains follow at residues 3496–3528 (EEPI…SRCH) and 3529–3560 (TATC…HDCS).

In terms of assembly, interacts (via Sushi domain 21) with ITGA9:ITGB1; thereby inhibits Ca(2+) intracellular signaling and as a result represses vasocontraction. Interacts (via Sushi domain 21) with ITGA4:ITGB1; thereby inhibits Ca(2+) intracellular signaling and as a result represses vasocontraction. Interacts with ANGPT1 and ANGPT2. Interacts with PEAR1 (via extracellular domain). Interacts with HSPG2, TLN1, FN1, COPA, CCT2, IQGAP1, LAMC1 and NID1. Interacts (via C-terminus) with TIE1. As to expression, expressed in the media layer of the arterial wall (at protein level). Highly expressed in lung and placenta, weakly expressed in the kidney, heart, brain and spleen. Also expressed in bone and periosteum, but not in cartilage and skeletal muscle.

It localises to the secreted. The protein localises to the nucleus. The protein resides in the cytoplasm. Its subcellular location is the membrane. Its function is as follows. Required for morphological development, cell alignment and migration of lymphatic endothelial cells during embryonic development, potentially via modulation of ANGPT2-TIE1 signaling and subsequent activation of FOXC2 transcription. Required for embryonic lymphatic vascular development, via mediating the correct formation of the first lymphovenous contact site and tight association of the lymphatic endothelium with the venous endothelium. Represses PRKCA-mediated L-type voltage-gated channel Ca(2+) influx and ROCK-mediated calcium sensitivity in vascular smooth muscle cells, via its interaction with integrins, thereby inhibiting vasocontraction. Promotes platelet activation, via its interaction with PEAR1 and subsequent activation of AKT/mTOR signaling. Plays a role in epidermal development and keratinocyte differentiation, independent of cell-cell adhesion. May play a role in initial cell attachment of stromal osteogenic cells. May promote myoblast cell adhesion when in the presence of integrin ITGA9:ITGB1. This Mus musculus (Mouse) protein is Sushi, von Willebrand factor type A, EGF and pentraxin domain-containing protein 1 (Svep1).